The following is a 111-amino-acid chain: Ig kappa chain V-III region PC 2413 (111 aa).

The tract at residues 1–23 (DIVLTQSPASLAVSLGQRATISC) is framework-1. A disulfide bridge connects residues cysteine 23 and cysteine 92. The interval 24 to 38 (RASESVVNYGVSLMH) is complementarity-determining-1. The tract at residues 39 to 53 (WFQQKPGQPPKLLIY) is framework-2. The tract at residues 54-60 (GASNRGS) is complementarity-determining-2. The tract at residues 61–92 (GVPARFSGSGSGTDFSLIIHPMEEDDSAMYFC) is framework-3. Positions 93–101 (HQTKEVPWT) are complementarity-determining-3. A framework-4 region spans residues 102–111 (FGGGTDLEIE).

In Mus musculus (Mouse), this protein is Ig kappa chain V-III region PC 2413.